The sequence spans 44 residues: Photosystem II reaction center protein K (44 aa).

Positions 1–7 (METLLLS) are excised as a propeptide. Residues 23–43 (LPIIPVFFLLLAFVWQAAIGF) traverse the membrane as a helical segment.

This sequence belongs to the PsbK family. PSII is composed of 1 copy each of membrane proteins PsbA, PsbB, PsbC, PsbD, PsbE, PsbF, PsbH, PsbI, PsbJ, PsbK, PsbL, PsbM, PsbT, PsbX, PsbY, PsbZ, Psb30/Ycf12, at least 3 peripheral proteins of the oxygen-evolving complex and a large number of cofactors. It forms dimeric complexes.

It localises to the plastid. The protein resides in the chloroplast thylakoid membrane. One of the components of the core complex of photosystem II (PSII). PSII is a light-driven water:plastoquinone oxidoreductase that uses light energy to abstract electrons from H(2)O, generating O(2) and a proton gradient subsequently used for ATP formation. It consists of a core antenna complex that captures photons, and an electron transfer chain that converts photonic excitation into a charge separation. This Phaeodactylum tricornutum (strain CCAP 1055/1) protein is Photosystem II reaction center protein K.